We begin with the raw amino-acid sequence, 257 residues long: Transcription factor GHD7 (257 aa).

Phosphoserine; by CK1 is present on Ser68. The CCT domain occupies 190–232 (REAKLMRYKEKRKKRCYEKQIRYASRKAYAEMRPRVRGRFAKE). Residues 198–204 (KEKRKKR) carry the Nuclear localization signal motif. Positions 226 to 245 (RGRFAKEPDQEAVAPPSTYV) are disordered.

As to quaternary structure, interacts with HD16/EL1. In terms of processing, phosphorylated at Ser-68 by HD16/EL1, a casein kinase 1. In terms of tissue distribution, expressed in the apical meristem, developing leaves, leaf sheaths of young seedling, root meristem, epidermal layer of developing stems and branch-primordia of developing panicles.

The protein resides in the nucleus. Probable transcription factor involved in the regulation of flowering time under long day (LD) conditions. Plays a major role as repressor of flowering. Controls flowering time by negatively regulating the expression of EHD1 and HD3A. This Oryza sativa subsp. japonica (Rice) protein is Transcription factor GHD7.